The sequence spans 75 residues: Parvalbumin beta 3 (75 aa).

Residue A1 is modified to N-acetylalanine. The region spanning 26–61 (YKAFFAKKAFFVIDQDKSGFIEEDELKLFLQVFSAG) is the EF-hand domain. Ca(2+) is bound by residues D39, D41, S43, F45, E47, and E50.

Belongs to the parvalbumin family.

Functionally, in muscle, parvalbumin is thought to be involved in relaxation after contraction. It binds two calcium ions. The sequence is that of Parvalbumin beta 3 from Merluccius gayi (South Pacific hake).